We begin with the raw amino-acid sequence, 592 residues long: Leucine-rich repeat and immunoglobulin-like domain-containing nogo receptor-interacting protein 3 (592 aa).

The signal sequence occupies residues 1 to 24 (MTCWLCVLSLPLLLLPAAPPPAGG). Residues 25-54 (CPARCECTVQTRAVACTRRRLTAVPDGIPA) enclose the LRRNT domain. The Extracellular segment spans residues 25-531 (CPARCECTVQ…LDLTTILVST (507 aa)). 11 LRR repeats span residues 55 to 76 (ETRL…DLAA), 79 to 100 (ALEE…AFAN), 103 to 124 (RLRV…VFTR), 127 to 148 (NLTL…TFQD), 151 to 172 (SLRR…AFAG), 175 to 196 (ALEE…SLGH), 207 to 228 (HLAI…LHLE), 247 to 268 (NLTS…ALRH), 271 to 292 (HLTC…SFRD), 295 to 316 (RLRE…AFLG), and 319 to 340 (QIRL…TFHS). An N-linked (GlcNAc...) asparagine glycan is attached at Asn-127. N-linked (GlcNAc...) asparagine glycosylation is present at Asn-185. N-linked (GlcNAc...) asparagine glycosylation is found at Asn-247, Asn-257, and Asn-276. Asn-324 is a glycosylation site (N-linked (GlcNAc...) asparagine). An LRRCT domain is found at 352-406 (NPLACDCRLLWIVQRRKTLNFDGRLPACATPAEVRGDALRNLPDSVLFEYFVCRK). Positions 407-496 (PKIRERRLQR…GNDTYFATLT (90 aa)) constitute an Ig-like C2-type domain. The cysteines at positions 429 and 480 are disulfide-linked. 2 N-linked (GlcNAc...) asparagine glycosylation sites follow: Asn-488 and Asn-512. Residues 532-552 (AMGCITFLGVVLFCFVLLFVW) form a helical membrane-spanning segment. Residues 553–592 (SRGRGQHKNNFSVEYSFRKVDGPAAAAGQGGARKFNMKMI) lie on the Cytoplasmic side of the membrane.

The protein localises to the membrane. The protein is Leucine-rich repeat and immunoglobulin-like domain-containing nogo receptor-interacting protein 3 (LINGO3) of Homo sapiens (Human).